A 1100-amino-acid polypeptide reads, in one-letter code: Guanylate cyclase 2G (1100 aa).

The first 43 residues, 1–43 (MASRTRSESPLEPRLYAGAGSRADHPSLVLMLSVVMLVTCLEA), serve as a signal peptide directing secretion. Over 44-481 (AKLTVGFHAP…VAGMTVTVTA (438 aa)) the chain is Extracellular. Residues asparagine 55, asparagine 85, asparagine 94, asparagine 217, asparagine 225, asparagine 238, asparagine 418, asparagine 440, and asparagine 443 are each glycosylated (N-linked (GlcNAc...) asparagine). A helical transmembrane segment spans residues 482 to 502 (VIPTVTFLVLASAAAITGLML). At 503 to 1100 (WRLRGKVQSH…EEEAKVSEIL (598 aa)) the chain is on the cytoplasmic side. One can recognise a Protein kinase domain in the interval 546 to 837 (SDTSTVKASA…EASPRGHVSI (292 aa)). The 131-residue stretch at 901-1031 (TIFFSDIVGF…DTVNMASRME (131 aa)) folds into the Guanylate cyclase domain.

It belongs to the adenylyl cyclase class-4/guanylyl cyclase family. As to quaternary structure, homooligomer. In vitro interacts with NPR1/GC-A. In terms of processing, N-glycosylated. As to expression, highly expressed in testis.

The protein resides in the cell membrane. The catalysed reaction is GTP = 3',5'-cyclic GMP + diphosphate. In Mus musculus (Mouse), this protein is Guanylate cyclase 2G (Gucy2g).